The sequence spans 426 residues: Enolase (426 aa).

Residue Gln165 coordinates (2R)-2-phosphoglycerate. Residue Glu209 is the Proton donor of the active site. 3 residues coordinate Mg(2+): Asp244, Glu287, and Asp313. (2R)-2-phosphoglycerate is bound by residues Lys338, Arg367, Ser368, and Lys389. Lys338 functions as the Proton acceptor in the catalytic mechanism.

It belongs to the enolase family. Requires Mg(2+) as cofactor.

The protein resides in the cytoplasm. It is found in the secreted. Its subcellular location is the cell surface. The catalysed reaction is (2R)-2-phosphoglycerate = phosphoenolpyruvate + H2O. Its pathway is carbohydrate degradation; glycolysis; pyruvate from D-glyceraldehyde 3-phosphate: step 4/5. Functionally, catalyzes the reversible conversion of 2-phosphoglycerate (2-PG) into phosphoenolpyruvate (PEP). It is essential for the degradation of carbohydrates via glycolysis. The sequence is that of Enolase from Methanococcus maripaludis (strain DSM 14266 / JCM 13030 / NBRC 101832 / S2 / LL).